We begin with the raw amino-acid sequence, 361 residues long: Elongator complex protein 4 (361 aa).

Disordered regions lie at residues Q93 to E124 and D338 to F361. Composition is skewed to polar residues over residues N104–P121 and I346–P355.

The protein belongs to the ELP4 family. As to quaternary structure, component of the elongator complex.

It localises to the cytoplasm. The protein resides in the nucleus. The protein operates within tRNA modification; 5-methoxycarbonylmethyl-2-thiouridine-tRNA biosynthesis. In terms of biological role, component of the elongator complex, a multiprotein complex which is required for multiple tRNA modifications, including mcm5U (5-methoxycarbonylmethyl uridine), mcm5s2U (5-methoxycarbonylmethyl-2-thiouridine), and ncm5U (5-carbamoylmethyl uridine). The elongator complex catalyzes formation of carboxymethyluridine in the wobble base at position 34 in tRNAs. This chain is Elongator complex protein 4, found in Schizosaccharomyces pombe (strain 972 / ATCC 24843) (Fission yeast).